Here is a 264-residue protein sequence, read N- to C-terminus: UPF0162 protein PM0557 (264 aa).

The protein belongs to the UPF0162 family.

This chain is UPF0162 protein PM0557, found in Pasteurella multocida (strain Pm70).